We begin with the raw amino-acid sequence, 229 residues long: ATP synthase subunit a (229 aa).

A run of 6 helical transmembrane segments spans residues 25-45 (ADAI…SMLA), 82-102 (FFPL…IGLV), 104-124 (GFFP…IVFV), 142-162 (FLGP…IGHF), 181-201 (LVLM…MMLM), and 202-222 (GVLV…IYIQ).

Belongs to the ATPase A chain family. As to quaternary structure, F-type ATPases have 2 components, CF(1) - the catalytic core - and CF(0) - the membrane proton channel. CF(1) has five subunits: alpha(3), beta(3), gamma(1), delta(1), epsilon(1). CF(0) has three main subunits: a(1), b(2) and c(9-12). The alpha and beta chains form an alternating ring which encloses part of the gamma chain. CF(1) is attached to CF(0) by a central stalk formed by the gamma and epsilon chains, while a peripheral stalk is formed by the delta and b chains.

The protein resides in the cell inner membrane. Functionally, key component of the proton channel; it plays a direct role in the translocation of protons across the membrane. The chain is ATP synthase subunit a from Geotalea uraniireducens (strain Rf4) (Geobacter uraniireducens).